A 60-amino-acid polypeptide reads, in one-letter code: Large ribosomal subunit protein uL30 (60 aa).

It belongs to the universal ribosomal protein uL30 family. In terms of assembly, part of the 50S ribosomal subunit.

This chain is Large ribosomal subunit protein uL30, found in Shewanella sp. (strain MR-7).